Consider the following 295-residue polypeptide: Putative attaching and effacing protein homolog (295 aa).

Positions 1 to 25 (MSHYKTGHKQPRFRYSVLARCVAWA) are cleaved as a signal peptide.

It belongs to the intimin/invasin family.

This Escherichia coli (strain K12) protein is Putative attaching and effacing protein homolog (eaeH).